Reading from the N-terminus, the 211-residue chain is FMN-dependent NADH:quinone oxidoreductase (211 aa).

FMN is bound by residues S10, 16–18 (STS), and 138–141 (TQGG).

This sequence belongs to the azoreductase type 1 family. As to quaternary structure, homodimer. Requires FMN as cofactor.

The catalysed reaction is 2 a quinone + NADH + H(+) = 2 a 1,4-benzosemiquinone + NAD(+). The enzyme catalyses N,N-dimethyl-1,4-phenylenediamine + anthranilate + 2 NAD(+) = 2-(4-dimethylaminophenyl)diazenylbenzoate + 2 NADH + 2 H(+). Its function is as follows. Quinone reductase that provides resistance to thiol-specific stress caused by electrophilic quinones. Also exhibits azoreductase activity. Catalyzes the reductive cleavage of the azo bond in aromatic azo compounds to the corresponding amines. This is FMN-dependent NADH:quinone oxidoreductase from Frankia alni (strain DSM 45986 / CECT 9034 / ACN14a).